Here is an 86-residue protein sequence, read N- to C-terminus: Large ribosomal subunit protein bL27 (86 aa).

The tract at residues 1–26 is disordered; it reads MAHKKAAGSTRNGRDSESKRLGVKRY.

Belongs to the bacterial ribosomal protein bL27 family.

The chain is Large ribosomal subunit protein bL27 from Marinobacter nauticus (strain ATCC 700491 / DSM 11845 / VT8) (Marinobacter aquaeolei).